Consider the following 145-residue polypeptide: Class I hydrophobin 1 (145 aa).

Positions 1 to 19 (MKFSYAIAAVVAAAASVQA) are cleaved as a signal peptide. Cystine bridges form between C65–C126, C72–C120, C73–C106, and C127–C140. N-linked (GlcNAc...) asparagine glycans are attached at residues N80 and N129.

It belongs to the fungal hydrophobin family. Self-assembles to form functional amyloid fibrils called rodlets. Self-assembly into fibrillar rodlets occurs spontaneously at hydrophobic:hydrophilic interfaces and the rodlets further associate laterally to form amphipathic monolayers.

It is found in the secreted. It localises to the cell wall. Aerial growth, conidiation, and dispersal of filamentous fungi in the environment rely upon a capability of their secreting small amphipathic proteins called hydrophobins (HPBs) with low sequence identity. Class I can self-assemble into an outermost layer of rodlet bundles on aerial cell surfaces, conferring cellular hydrophobicity that supports fungal growth, development and dispersal; whereas Class II form highly ordered films at water-air interfaces through intermolecular interactions but contribute nothing to the rodlet structure. Hyd1 is a class I hydrophobin that is crucial for the initiation of primordia formation. Plays also important roles in nitrogen regulation and resistance to abiotic stresses. In Ganoderma lucidum (Ling zhi medicinal fungus), this protein is Class I hydrophobin 1.